We begin with the raw amino-acid sequence, 204 residues long: High frequency lysogenization protein HflD homolog (204 aa).

This sequence belongs to the HflD family.

The protein localises to the cytoplasm. It localises to the cell inner membrane. This chain is High frequency lysogenization protein HflD homolog, found in Xylella fastidiosa (strain M23).